The primary structure comprises 130 residues: Trypsin inhibitor (130 aa).

The tract at residues 27–49 is disordered; that stretch reads LHKQARQSGSGPSPQGPQQRPPL. The span at 32 to 49 shows a compositional bias: low complexity; sequence RQSGSGPSPQGPQQRPPL.

It belongs to the 2S seed storage albumins family. In terms of assembly, the protein consists of two chains linked by disulfide bonds.

Functionally, inhibits trypsin with a Ki of 7 x 10(-6) M. In Mutarda arvensis (Charlock mustard), this protein is Trypsin inhibitor.